The sequence spans 108 residues: Large ribosomal subunit protein uL24 (108 aa).

The protein belongs to the universal ribosomal protein uL24 family. Part of the 50S ribosomal subunit.

Functionally, one of two assembly initiator proteins, it binds directly to the 5'-end of the 23S rRNA, where it nucleates assembly of the 50S subunit. Its function is as follows. One of the proteins that surrounds the polypeptide exit tunnel on the outside of the subunit. The chain is Large ribosomal subunit protein uL24 from Salinispora tropica (strain ATCC BAA-916 / DSM 44818 / JCM 13857 / NBRC 105044 / CNB-440).